A 218-amino-acid chain; its full sequence is Probable signal peptidase I-2 (218 aa).

The Cytoplasmic segment spans residues 1–26; it reads MTENIVRETSKKKESPPENTWLELGK. A helical membrane pass occupies residues 27–43; it reads TMVTAVILAIGIRTFVA. At 44–218 the chain is on the periplasmic side; it reads EARYIPSSSM…ISPQTVPESR (175 aa). Residues Ser-52 and Lys-100 contribute to the active site.

Belongs to the peptidase S26 family.

Its subcellular location is the cell membrane. The catalysed reaction is Cleavage of hydrophobic, N-terminal signal or leader sequences from secreted and periplasmic proteins.. The chain is Probable signal peptidase I-2 (lepB2) from Synechocystis sp. (strain ATCC 27184 / PCC 6803 / Kazusa).